A 136-amino-acid chain; its full sequence is ATP synthase epsilon chain (136 aa).

The segment at 112-136 (GNSADKLKAKESLNKARARSQAVGE) is disordered. Basic and acidic residues predominate over residues 116-125 (DKLKAKESLN).

Belongs to the ATPase epsilon chain family. In terms of assembly, F-type ATPases have 2 components, CF(1) - the catalytic core - and CF(0) - the membrane proton channel. CF(1) has five subunits: alpha(3), beta(3), gamma(1), delta(1), epsilon(1). CF(0) has three main subunits: a, b and c.

Its subcellular location is the cellular thylakoid membrane. Functionally, produces ATP from ADP in the presence of a proton gradient across the membrane. In Prochlorococcus marinus (strain SARG / CCMP1375 / SS120), this protein is ATP synthase epsilon chain.